An 895-amino-acid polypeptide reads, in one-letter code: MEVQLGLGRVYPRPPSKTYRGAFQNLFQSVREVIQNPGPRHPEAASAAPPGASLQQQQQQQQETSPRQQQQQQQGEDGSPQAHRRGPTGYLVLDEEQQPSQPQSAPECHPERGCVPEPGAAVAAGKGLPQQLPAPPDEDDSAAPSTLSLLGPTFPGLSSCSTDLKDILSEASTMQLLQQQQQEAVSEGSSSGRAREASGAPTSSKDNYLGGTSTISDSAKELCKAVSVSMGLGVEALEHLSPGEQLRGDCMYAPVLGVPPAVRPTPCAPLAECKGSLLDDSAGKSTEDTAEYSPFKGGYTKGLEGESLGCSGSAAAGSSGTLELPSTLSLYKSGALDEAAAYQSRDYYNFPLALAGPPPPPPPPHPHARIKLENPLDYGSAWAAAAAQCRYGDLASLHGAGAAGPGSGSPSAAASSSWHTLFTAEEGQLYGPCGGGGGGGGGGGGGAGEAGAVAPYGYTRPPQGLAGQEGDFTAPDVWYPGGMVSRVPYPSPTCVKSEMGPWMDSYSGPYGDMRLETARDHVLPIDYYFPPQKTCLICGDEASGCHYGALTCGSCKVFFKRAAEGKQKYLCASRNDCTIDKFRRKNCPSCRLRKCYEAGMTLGARKLKKLGNLKLQEEGEASSTTSPTEETAQKLTVSHIEGYECQPIFLNVLEAIEPGVVCAGHDNNQPDSFAALLSSLNELGERQLVHVVKWAKALPGFRNLHVDDQMAVIQYSWMGLMVFAMGWRSFTNVNSRMLYFAPDLVFNEYRMHKSRMYSQCVRMRHLSQEFGWLQITPQEFLCMKALLLFSIIPVDGLKNQKFFDELRMNYIKELDRIIACKRKNPTSCSRRFYQLTKLLDSVQPIARELHQFTFDLLIKSHMVSVDFPEMMAEIISVQVPKILSGKVKPIYFHTQ.

Residues 1–533 are modulating; sequence MEVQLGLGRV…PIDYYFPPQK (533 aa). The tract at residues 1–562 is interaction with ZNF318; it reads MEVQLGLGRV…GSCKVFFKRA (562 aa). 2 disordered regions span residues 33–150 and 175–211; these read VIQN…LSLL and QLLQQQQQEAVSEGSSSGRAREASGAPTSSKDNYLGG. Low complexity-rich tracts occupy residues 44-81 and 175-200; these read AASAAPPGASLQQQQQQQQETSPRQQQQQQQGEDGSPQ and QLLQQQQQEAVSEGSSSGRAREASGA. Residue serine 65 is modified to Phosphoserine; by CDK9. A Phosphoserine modification is found at serine 79. The span at 201–211 shows a compositional bias: polar residues; the sequence is PTSSKDNYLGG. Tyrosine 208 is subject to Phosphotyrosine; by CSK. Serine 241 is subject to Phosphoserine. Phosphotyrosine; by CSK and TNK2 is present on tyrosine 252. Residues tyrosine 292, tyrosine 331, tyrosine 342, and tyrosine 347 each carry the phosphotyrosine; by CSK modification. Tyrosine 348 is modified (phosphotyrosine; by CSK and TNK2). Lysine 371 participates in a covalent cross-link: Glycyl lysine isopeptide (Lys-Gly) (interchain with G-Cter in SUMO). Position 378 is a phosphotyrosine; by CSK (tyrosine 378). Lysine 496 participates in a covalent cross-link: Glycyl lysine isopeptide (Lys-Gly) (interchain with G-Cter in SUMO). A phosphotyrosine; by CSK mark is found at tyrosine 510 and tyrosine 527. The tract at residues 527–894 is interaction with LPXN; it reads YYFPPQKTCL…GKVKPIYFHT (368 aa). A DNA-binding region (nuclear receptor) is located at residues 534–607; sequence TCLICGDEAS…AGMTLGARKL (74 aa). 2 consecutive NR C4-type zinc fingers follow at residues 535–555 and 571–595; these read CLICGDEASGCHYGALTCGSC and CASRNDCTIDKFRRKNCPSCRLRKC. The interaction with HIPK3 stretch occupies residues 547 to 637; sequence YGALTCGSCK…TEETAQKLTV (91 aa). The interval 567 to 894 is interaction with CCAR1; sequence QKYLCASRND…GKVKPIYFHT (328 aa). Positions 600–894 are interaction with KAT7; the sequence is MTLGARKLKK…GKVKPIYFHT (295 aa). Serine 626 is modified (phosphoserine; by STK4/MST1). Residues 644 to 875 enclose the NR LBD domain; that stretch reads ECQPIFLNVL…DFPEMMAEII (232 aa). Residues asparagine 681 and arginine 728 each contribute to the 17beta-hydroxy-5alpha-androstan-3-one site. Residues lysine 821 and lysine 823 each participate in a glycyl lysine isopeptide (Lys-Gly) (interchain with G-Cter in ubiquitin) cross-link. Threonine 853 is a 17beta-hydroxy-5alpha-androstan-3-one binding site. Tyrosine 891 is modified (phosphotyrosine; by CSK).

This sequence belongs to the nuclear hormone receptor family. NR3 subfamily. In terms of assembly, binds DNA as a homodimer. Part of a ternary complex containing AR, EFCAB6/DJBP and PARK7. Interacts with HIPK3 and NR0B2 in the presence of androgen. The ligand binding domain interacts with KAT7/HBO1 in the presence of dihydrotestosterone. Interacts with EFCAB6/DJBP, PQBP1, RANBP9, RBAK, SPDEF, SRA1, TGFB1I1 and RREB1. Interacts with ZMIZ1/ZIMP10 and ZMIZ2/ZMIP7 which both enhance its transactivation activity. Interacts with SLC30A9 and RAD54L2/ARIP4. Interacts with MACROD1 (via macro domain). Interacts via the ligand-binding domain with LXXLL and FXXLF motifs from NCOA1, NCOA2, NCOA3 and MAGEA11. Interacts (via nuclear receptor DNA binding domain and nuclear receptor ligand binding domain) with NCOA4. The AR N-terminal poly-Gln region binds Ran resulting in enhancement of AR-mediated transactivation. Ran-binding decreases as the poly-Gln length increases. Interacts with HIP1 (via coiled coil domain). Interacts (via ligand-binding domain) with TRIM68. Interacts with TNK2. Interacts with USP26. Interacts with RNF6. Interacts (regulated by RNF6 probably through polyubiquitination) with RNF14; regulates AR transcriptional activity. Interacts with PRMT2 and TRIM24. Interacts with RACK1. Interacts with RANBP10; this interaction enhances dihydrotestosterone-induced AR transcriptional activity. Interacts with PRPF6 in a hormone-independent way; this interaction enhances dihydrotestosterone-induced AR transcriptional activity. Interacts with STK4/MST1. Interacts with ZIPK/DAPK3. Interacts with LPXN. Interacts with MAK. Part of a complex containing AR, MAK and NCOA3. Interacts with CRY1. Interacts with CCAR1 and GATA2. Interacts with ZNF318. Interacts with BUD31. Interacts with ARID4A. Interacts with ARID4B. Interacts (via NR LBD domain) with ZBTB7A; the interaction is direct and androgen-dependent. Interacts with NCOR1. Interacts with NCOR2. Interacts with CRY2 in a ligand-dependent manner. In terms of processing, phosphorylated in prostate cancer cells in response to several growth factors including EGF. Phosphorylation is induced by c-Src kinase (CSK). Tyr-510 is one of the major phosphorylation sites and an increase in phosphorylation and Src kinase activity is associated with prostate cancer progression. Phosphorylation by TNK2 enhances the DNA-binding and transcriptional activity. Phosphorylation at Ser-65 by CDK9 regulates AR promoter selectivity and cell growth. Sumoylated on Lys-371 (major) and Lys-496. Ubiquitinated. Deubiquitinated by USP26. 'Lys-6' and 'Lys-27'-linked polyubiquitination by RNF6 modulates AR transcriptional activity and specificity. Post-translationally, palmitoylated by ZDHHC7 and ZDHHC21. Palmitoylation is required for plasma membrane targeting and for rapid intracellular signaling via ERK and AKT kinases and cAMP generation.

It is found in the nucleus. The protein resides in the cytoplasm. Functionally, steroid hormone receptors are ligand-activated transcription factors that regulate eukaryotic gene expression and affect cellular proliferation and differentiation in target tissues. Transcription factor activity is modulated by bound coactivator and corepressor proteins like ZBTB7A that recruits NCOR1 and NCOR2 to the androgen response elements/ARE on target genes, negatively regulating androgen receptor signaling and androgen-induced cell proliferation. Transcription activation is also down-regulated by NR0B2. Activated, but not phosphorylated, by HIPK3 and ZIPK/DAPK3. This chain is Androgen receptor (AR), found in Macaca fascicularis (Crab-eating macaque).